Reading from the N-terminus, the 859-residue chain is Homeobox-leucine zipper protein HOX32 (859 aa).

The interval 7–31 (AAVHGVGRQDRSSPGGGGAPQVDTG) is disordered. The homeobox DNA-binding region spans 29 to 92 (DTGKYVRYTP…NRRCREKQRK (64 aa)). Residues 100 to 129 (VNRKLTAMNKLLMEENDRLQKQVSRLVYEN) are a coiled coil. Residues 146–164 (TSCESVVTSGQHHQQQNPA) show a composition bias toward polar residues. The interval 146 to 172 (TSCESVVTSGQHHQQQNPAATRPQRDA) is disordered. The START domain maps to 171-393 (DANNPAGLLA…LRHIRQIAHE (223 aa)).

It belongs to the HD-ZIP homeobox family. Class III subfamily. As to expression, expressed in seedlings, roots, stems, leaf sheaths and blades and panicles.

The protein resides in the nucleus. Probable transcription factor. This is Homeobox-leucine zipper protein HOX32 (HOX32) from Oryza sativa subsp. indica (Rice).